The sequence spans 610 residues: Glutamine--fructose-6-phosphate aminotransferase [isomerizing] (610 aa).

Cys2 serves as the catalytic Nucleophile; for GATase activity. The region spanning 2 to 219 (CGIVGYAGKK…SGEWGYFSQN (218 aa)) is the Glutamine amidotransferase type-2 domain. 2 SIS domains span residues 287–431 (SKDV…SDEE) and 459–600 (MSSH…PDQP). Lys605 functions as the For Fru-6P isomerization activity in the catalytic mechanism.

As to quaternary structure, homodimer.

The protein localises to the cytoplasm. It catalyses the reaction D-fructose 6-phosphate + L-glutamine = D-glucosamine 6-phosphate + L-glutamate. Catalyzes the first step in hexosamine metabolism, converting fructose-6P into glucosamine-6P using glutamine as a nitrogen source. This is Glutamine--fructose-6-phosphate aminotransferase [isomerizing] from Leptospira interrogans serogroup Icterohaemorrhagiae serovar copenhageni (strain Fiocruz L1-130).